A 190-amino-acid chain; its full sequence is Peptidyl-tRNA hydrolase (190 aa).

Tyr-18 contributes to the tRNA binding site. The active-site Proton acceptor is His-23. 3 residues coordinate tRNA: Phe-69, Asn-71, and Asn-117.

The protein belongs to the PTH family. In terms of assembly, monomer.

The protein localises to the cytoplasm. It catalyses the reaction an N-acyl-L-alpha-aminoacyl-tRNA + H2O = an N-acyl-L-amino acid + a tRNA + H(+). Functionally, hydrolyzes ribosome-free peptidyl-tRNAs (with 1 or more amino acids incorporated), which drop off the ribosome during protein synthesis, or as a result of ribosome stalling. Catalyzes the release of premature peptidyl moieties from peptidyl-tRNA molecules trapped in stalled 50S ribosomal subunits, and thus maintains levels of free tRNAs and 50S ribosomes. The protein is Peptidyl-tRNA hydrolase of Rhodococcus jostii (strain RHA1).